Consider the following 363-residue polypeptide: MIIDTTELQAINSFFKLESLKEVYGIIWILIPIFTLVLGITIGVLVIVWLEREISAGIQQRIGPEYAGPLGILQALADGTKLLFKENLLPSRGDARLFSIGPSIAVISILLSYSVIPFGYRLVLADLTIGVFLWIAISSIAPIGLLMSGYGSNNKYSFLGGLRAAAQSISYEIPLTLCVLSISLLSNSSSTVDIVEAQSKYGFWGWNLWRQPIGFIIFLISSLAECERLPFDLPEAEEELVAGYQTEYSGIKFGLFYVASYLNLLVSSLFVTVLYLGGWNLSIPYIFVSEIFDINKAGKVFGPVIGIFITLAKTYLFLFIPIATRWTLPRLRMDQLLNLGWKFLLPISLGNLLLTTSSQLLSL.

Helical transmembrane passes span 26–46 (IIWI…GVLV), 98–118 (FSIG…VIPF), 127–147 (LTIG…GLLM), 246–266 (TEYS…NLLV), 268–288 (SLFV…YIFV), 300–320 (VFGP…FLFI), and 336–356 (LLNL…LLTT).

The protein belongs to the complex I subunit 1 family. NDH is composed of at least 16 different subunits, 5 of which are encoded in the nucleus.

The protein localises to the plastid. It is found in the chloroplast thylakoid membrane. The catalysed reaction is a plastoquinone + NADH + (n+1) H(+)(in) = a plastoquinol + NAD(+) + n H(+)(out). It catalyses the reaction a plastoquinone + NADPH + (n+1) H(+)(in) = a plastoquinol + NADP(+) + n H(+)(out). Functionally, NDH shuttles electrons from NAD(P)H:plastoquinone, via FMN and iron-sulfur (Fe-S) centers, to quinones in the photosynthetic chain and possibly in a chloroplast respiratory chain. The immediate electron acceptor for the enzyme in this species is believed to be plastoquinone. Couples the redox reaction to proton translocation, and thus conserves the redox energy in a proton gradient. This Coffea arabica (Arabian coffee) protein is NAD(P)H-quinone oxidoreductase subunit 1, chloroplastic.